The chain runs to 498 residues: Osteoclast stimulatory transmembrane protein (498 aa).

Residues 1 to 51 lie on the Cytoplasmic side of the membrane; the sequence is MRTIRAATEHLFGLGWKFWRLGICKAVVPLQAAWKAFSQPVPASCNELLTQ. The helical transmembrane segment at 52–72 threads the bilayer; that stretch reads LLLCVSLASLIAGLAHHWLVS. Over 73 to 81 the chain is Extracellular; it reads LQLYPLGPP. Residues 82-102 traverse the membrane as a helical segment; the sequence is ALVTSLCGLFVFLSLGLVPPI. Residues 103-121 lie on the Cytoplasmic side of the membrane; that stretch reads RCLFVLSVPTLGSKQGRRL. A helical membrane pass occupies residues 122 to 142; sequence LLSYSAANLAVAVVPNVLGNV. Topologically, residues 143–226 are extracellular; the sequence is RAAGQVLSCV…LARAALGTQR (84 aa). The chain crosses the membrane as a helical span at residues 227–247; the sequence is VVTGLFLLGLLGESAWYLHRY. At 248 to 303 the chain is on the cytoplasmic side; it reads LTDLRFDNIYATRQLVRQLAQAGATHLLTSPPPWLLQTAQPKLSREELLSCLLRLG. The helical transmembrane segment at 304 to 324 threads the bilayer; that stretch reads LLALLLVATAVTVASDYGAFL. Topologically, residues 325–401 are extracellular; that stretch reads LAQAAVAWAQ…QAQPPRVTAA (77 aa). A helical transmembrane segment spans residues 402–422; that stretch reads LAAGALQLLAGATLVLQAYAW. At 423 to 498 the chain is on the cytoplasmic side; the sequence is RLRHTIAASF…DSLGPPYDLE (76 aa). The interval 449-498 is disordered; the sequence is QRRHNQSDHLNKQPGTMATRESRKPGQGTRTLESQGPQAHDSLGPPYDLE. Residues 476–485 are compositionally biased toward polar residues; sequence GTRTLESQGP.

As to expression, expressed in osteoclast (at protein level). Ubiquitous. Highly expressed in multi-nuclear osteoclast cells compared to mono-nuclear macrophages. Expressed in foreign body giant cells (FBGCs).

The protein resides in the membrane. Its function is as follows. Probable cell surface receptor that plays a role in cellular fusion and cell differentiation. Cooperates with DCSTAMP in modulating cell-cell fusion in both osteoclasts and foreign body giant cells (FBGCs). Involved in osteoclast bone resorption. Promotes osteoclast differentiation and may play a role in the multinucleated osteoclast maturation. The polypeptide is Osteoclast stimulatory transmembrane protein (Ocstamp) (Mus musculus (Mouse)).